Reading from the N-terminus, the 81-residue chain is CLAVATA3/ESR (CLE)-related protein 5 (81 aa).

An N-terminal signal peptide occupies residues 1 to 26; it reads MATLILKQTLIILLIIFSLQTLSSQA. Hydroxyproline occurs at positions 73 and 76. A glycan (O-linked (Ara...) hydroxyproline) is linked at Pro76.

Belongs to the CLV3/ESR signal peptide family. In terms of processing, the O-glycosylation (arabinosylation) of the hydroxyproline Pro-76 enhances binding affinity of the CLE5p peptide for its receptor. In terms of tissue distribution, mostly expressed in roots, and, to a lower extent, in seedlings, stems, apex, flowers and siliques.

The protein resides in the secreted. Its subcellular location is the extracellular space. In terms of biological role, extracellular signal peptide that regulates cell fate. The sequence is that of CLAVATA3/ESR (CLE)-related protein 5 from Arabidopsis thaliana (Mouse-ear cress).